Here is a 154-residue protein sequence, read N- to C-terminus: Myoglobin (154 aa).

A Globin domain is found at 2-148; that stretch reads GLSDGEWQSV…FRNDIAAKYK (147 aa). At Ser-4 the chain carries Phosphoserine. His-65 lines the nitrite pocket. An O2-binding site is contributed by His-65. Residue Thr-68 is modified to Phosphothreonine. His-94 provides a ligand contact to heme b.

Belongs to the globin family. Monomeric.

The protein resides in the cytoplasm. Its subcellular location is the sarcoplasm. The enzyme catalyses Fe(III)-heme b-[protein] + nitric oxide + H2O = Fe(II)-heme b-[protein] + nitrite + 2 H(+). The catalysed reaction is H2O2 + AH2 = A + 2 H2O. Its function is as follows. Monomeric heme protein which primary function is to store oxygen and facilitate its diffusion within muscle tissues. Reversibly binds oxygen through a pentacoordinated heme iron and enables its timely and efficient release as needed during periods of heightened demand. Depending on the oxidative conditions of tissues and cells, and in addition to its ability to bind oxygen, it also has a nitrite reductase activity whereby it regulates the production of bioactive nitric oxide. Under stress conditions, like hypoxia and anoxia, it also protects cells against reactive oxygen species thanks to its pseudoperoxidase activity. This chain is Myoglobin (MB), found in Nycticebus coucang (Slow loris).